Reading from the N-terminus, the 408-residue chain is MSNNNDKQYTTQELNAMSNEDLARLGTELDDVTIAYRKERFPIANDPAEKRAARAVTFWLVLGIIGGLGFLATYIFWPWEYKAHGDEGLLAYTLYTPMLGITSGLCILSLGFAVVLYVKKFIPEEIAVQRRHDGPSEEVDRRTIVALLNDSWQTSTLGRRKLIMGLAGGGAVLAGLTIIAPMGGMIKNPWNPKEGPMDVQGDGTLWTSGWTLVENDVKVYLGRDTAAIAESHTDATGEHWSTTGVSRLVRMRPEDLAAASMETVFPLPAEMVNDGAEYDPAKDVYEHQMHSVHGPRNAVMLIRLRTADAEKVIEREGQESFHYGDYYAYSKICTHIGCPTSLYEAQTNRILCPCHQSQFDALHYGKPVFGPAARALPQLPITVDEEGYLIAAGNFIEPLGPAFWERKS.

3 helical membrane-spanning segments follow: residues 56–76, 98–118, and 162–182; these read VTFWLVLGIIGGLGFLATYIF, MLGITSGLCILSLGFAVVLYV, and LIMGLAGGGAVLAGLTIIAPM. The 98-residue stretch at 293–390 folds into the Rieske domain; it reads HGPRNAVMLI…ITVDEEGYLI (98 aa). Residues Cys333, His335, Cys352, and His355 each contribute to the [2Fe-2S] cluster site. A disulfide bond links Cys338 and Cys354.

It belongs to the Rieske iron-sulfur protein family. In terms of assembly, the cytochrome bc1 complex is composed of a cytochrome b (QcrB), the Rieske iron-sulfur protein (QcrA) and a diheme cytochrome c (QcrC) subunit. The bc1 complex forms a supercomplex with cytochrome c oxidase (cytochrome aa3). Requires [2Fe-2S] cluster as cofactor.

The protein localises to the cell membrane. Its function is as follows. Iron-sulfur subunit of the cytochrome bc1 complex, an essential component of the respiratory electron transport chain required for ATP synthesis. The bc1 complex catalyzes the oxidation of menaquinol and the reduction of cytochrome c in the respiratory chain. The bc1 complex operates through a Q-cycle mechanism that couples electron transfer to generation of the proton gradient that drives ATP synthesis. The chain is Cytochrome bc1 complex Rieske iron-sulfur subunit (qcrA) from Corynebacterium glutamicum (strain ATCC 13032 / DSM 20300 / JCM 1318 / BCRC 11384 / CCUG 27702 / LMG 3730 / NBRC 12168 / NCIMB 10025 / NRRL B-2784 / 534).